Reading from the N-terminus, the 456-residue chain is UDP-N-acetylmuramate--L-alanine ligase (456 aa).

112-118 serves as a coordination point for ATP; the sequence is GTHGKTT.

This sequence belongs to the MurCDEF family.

The protein localises to the cytoplasm. The enzyme catalyses UDP-N-acetyl-alpha-D-muramate + L-alanine + ATP = UDP-N-acetyl-alpha-D-muramoyl-L-alanine + ADP + phosphate + H(+). It functions in the pathway cell wall biogenesis; peptidoglycan biosynthesis. Cell wall formation. The chain is UDP-N-acetylmuramate--L-alanine ligase from Trichlorobacter lovleyi (strain ATCC BAA-1151 / DSM 17278 / SZ) (Geobacter lovleyi).